The sequence spans 1425 residues: Death-associated protein kinase dapk-1 (1425 aa).

Positions 28-289 constitute a Protein kinase domain; sequence YEIETELGSG…VEECLQHPWI (262 aa). Residues 34–42 and lysine 57 each bind ATP; that span reads LGSGQFAVV. The Proton acceptor role is filled by aspartate 155. 10 ANK repeats span residues 392 to 421, 425 to 454, 458 to 487, 491 to 520, 524 to 553, 557 to 586, 590 to 619, 623 to 652, 810 to 841, and 934 to 963; these read NGAT…NICA, NGDT…DVDS, TGET…RLDL, SGDT…PLHL, REET…PIDA, DGKT…DINH, HGDT…TVDS, NKKT…DVTL, GGYE…DPTE, and IGMK…ILDT. Residues 695 to 950 form the Roc domain; sequence LDTSLRRIKL…MELAKCRTNI (256 aa). The region spanning 1308-1389 is the Death domain; sequence ELACLLDPPH…DARDALYRTV (82 aa).

Belongs to the protein kinase superfamily. CAMK Ser/Thr protein kinase family. DAP kinase subfamily. In terms of assembly, interacts with ptrn-1. The cofactor is Mg(2+). Expressed in epidermis, muscles and neurons.

It localises to the cytoplasm. The protein resides in the cytosol. It is found in the cytoskeleton. It carries out the reaction L-seryl-[protein] + ATP = O-phospho-L-seryl-[protein] + ADP + H(+). The enzyme catalyses L-threonyl-[protein] + ATP = O-phospho-L-threonyl-[protein] + ADP + H(+). In terms of biological role, negative regulator of epidermal barrier repair and innate immune responses to wounding. The role in epidermal tissue integrity and wound healing is established through the inhibition of epidermal microtubule stability, possibly via the negative regulation of the microtubule minus-end binding protein ptrn-1. In epidermis, prevents expression of specific unc-44 isoforms probably by promoting nuclear localization of pinn-1, which in turn may affect sydn-1-ssup-72-mediated regulation of alternative polyadenylation of unc-44 mRNA. Appears to act downstream of or in parallel to muscarinic signaling in the regulation of autophagy. This Caenorhabditis elegans protein is Death-associated protein kinase dapk-1.